A 309-amino-acid polypeptide reads, in one-letter code: uncharacterized protein (309 aa).

Residues 1 to 16 show a composition bias toward basic residues; it reads MAGNSRRRGAVRKAGT. Positions 1-70 are disordered; sequence MAGNSRRRGA…AKRTEETETV (70 aa). S-adenosyl-L-methionine contacts are provided by glycine 261, isoleucine 281, and leucine 290.

This sequence belongs to the class IV-like SAM-binding methyltransferase superfamily. RNA methyltransferase TrmH family.

This is an uncharacterized protein from Mycobacterium avium (strain 104).